We begin with the raw amino-acid sequence, 334 residues long: Holliday junction branch migration complex subunit RuvB (334 aa).

Residues 1-182 (MNERMVDQSM…FGVHLRLEYY (182 aa)) are large ATPase domain (RuvB-L). ATP is bound by residues L21, R22, G63, K66, T67, T68, 129–131 (EDF), R172, Y182, and R219. T67 provides a ligand contact to Mg(2+). The small ATPAse domain (RuvB-S) stretch occupies residues 183 to 253 (NESDLKEIII…TTKHALGLLQ (71 aa)). Positions 256 to 334 (QHGLDYIDHK…HFAKSNEERE (79 aa)) are head domain (RuvB-H). R292, R311, and R316 together coordinate DNA.

This sequence belongs to the RuvB family. As to quaternary structure, homohexamer. Forms an RuvA(8)-RuvB(12)-Holliday junction (HJ) complex. HJ DNA is sandwiched between 2 RuvA tetramers; dsDNA enters through RuvA and exits via RuvB. An RuvB hexamer assembles on each DNA strand where it exits the tetramer. Each RuvB hexamer is contacted by two RuvA subunits (via domain III) on 2 adjacent RuvB subunits; this complex drives branch migration. In the full resolvosome a probable DNA-RuvA(4)-RuvB(12)-RuvC(2) complex forms which resolves the HJ.

It is found in the cytoplasm. It carries out the reaction ATP + H2O = ADP + phosphate + H(+). Functionally, the RuvA-RuvB-RuvC complex processes Holliday junction (HJ) DNA during genetic recombination and DNA repair, while the RuvA-RuvB complex plays an important role in the rescue of blocked DNA replication forks via replication fork reversal (RFR). RuvA specifically binds to HJ cruciform DNA, conferring on it an open structure. The RuvB hexamer acts as an ATP-dependent pump, pulling dsDNA into and through the RuvAB complex. RuvB forms 2 homohexamers on either side of HJ DNA bound by 1 or 2 RuvA tetramers; 4 subunits per hexamer contact DNA at a time. Coordinated motions by a converter formed by DNA-disengaged RuvB subunits stimulates ATP hydrolysis and nucleotide exchange. Immobilization of the converter enables RuvB to convert the ATP-contained energy into a lever motion, pulling 2 nucleotides of DNA out of the RuvA tetramer per ATP hydrolyzed, thus driving DNA branch migration. The RuvB motors rotate together with the DNA substrate, which together with the progressing nucleotide cycle form the mechanistic basis for DNA recombination by continuous HJ branch migration. Branch migration allows RuvC to scan DNA until it finds its consensus sequence, where it cleaves and resolves cruciform DNA. In Staphylococcus aureus (strain bovine RF122 / ET3-1), this protein is Holliday junction branch migration complex subunit RuvB.